Consider the following 783-residue polypeptide: DNA repair and recombination protein RAD54-like (783 aa).

The segment at 2–9 (RRSLAPSQ) is required for chromatin remodeling, strand pairing activities and coupling of ATPase activity. The residue at position 22 (threonine 22) is a Phosphothreonine. The Helicase ATP-binding domain occupies 165 to 340 (EGKRGNFNGC…FSLVNFVNPE (176 aa)). 178–185 (DEMGLGKT) serves as a coordination point for ATP. Residues 291–294 (DEGH) carry the DEGH box motif. The 158-residue stretch at 497–654 (LLDFMLAAIR…NNESSEKHFT (158 aa)) folds into the Helicase C-terminal domain. Residues 737–783 (AESKPAAITEDDESEQQQQSPKRTSKNDDNDEDFDPENSAEEQFLGF) form a disordered region. A compositionally biased stretch (acidic residues) spans 765–776 (DNDEDFDPENSA).

It belongs to the SNF2/RAD54 helicase family. In terms of assembly, interacts (via N-terminus) with spn-A/Rad51.

It is found in the nucleus. Functionally, involved in mitotic DNA repair and meiotic recombination. Functions in the recombinational DNA repair pathway. Essential for interhomolog gene conversion (GC), but may have a less important role in intersister GC than spn-A/Rad51. In the presence of DNA, spn-A/Rad51 enhances the ATPase activity of okr/Rad54. The protein is DNA repair and recombination protein RAD54-like of Drosophila mojavensis (Fruit fly).